We begin with the raw amino-acid sequence, 297 residues long: Acetyl-coenzyme A carboxylase carboxyl transferase subunit beta (297 aa).

Residues 25–294 (LWVKCPETGQ…LPPKGRLPRP (270 aa)) enclose the CoA carboxyltransferase N-terminal domain.

The protein belongs to the AccD/PCCB family. In terms of assembly, acetyl-CoA carboxylase is a heterohexamer composed of biotin carboxyl carrier protein (AccB), biotin carboxylase (AccC) and two subunits each of ACCase subunit alpha (AccA) and ACCase subunit beta (AccD).

It is found in the cytoplasm. It catalyses the reaction N(6)-carboxybiotinyl-L-lysyl-[protein] + acetyl-CoA = N(6)-biotinyl-L-lysyl-[protein] + malonyl-CoA. The protein operates within lipid metabolism; malonyl-CoA biosynthesis; malonyl-CoA from acetyl-CoA: step 1/1. Its function is as follows. Component of the acetyl coenzyme A carboxylase (ACC) complex. Biotin carboxylase (BC) catalyzes the carboxylation of biotin on its carrier protein (BCCP) and then the CO(2) group is transferred by the transcarboxylase to acetyl-CoA to form malonyl-CoA. The protein is Acetyl-coenzyme A carboxylase carboxyl transferase subunit beta of Xanthobacter autotrophicus (strain ATCC BAA-1158 / Py2).